Consider the following 354-residue polypeptide: Phospho-N-acetylmuramoyl-pentapeptide-transferase (354 aa).

Transmembrane regions (helical) follow at residues 16–36, 66–86, 88–108, 130–150, 168–188, 193–213, 227–247, 257–277, 282–302, and 331–351; these read YITV…LYLM, TPTM…LLTV, IHNP…AIGV, FFLQ…YAHL, IFGI…VNLT, GLAT…TYIT, IIGV…LIGF, VFMG…MAII, VLLI…IIQV, and KIIV…LITL.

The protein belongs to the glycosyltransferase 4 family. MraY subfamily. Requires Mg(2+) as cofactor.

Its subcellular location is the cell inner membrane. It catalyses the reaction UDP-N-acetyl-alpha-D-muramoyl-L-alanyl-gamma-D-glutamyl-meso-2,6-diaminopimeloyl-D-alanyl-D-alanine + di-trans,octa-cis-undecaprenyl phosphate = di-trans,octa-cis-undecaprenyl diphospho-N-acetyl-alpha-D-muramoyl-L-alanyl-D-glutamyl-meso-2,6-diaminopimeloyl-D-alanyl-D-alanine + UMP. Its pathway is cell wall biogenesis; peptidoglycan biosynthesis. In terms of biological role, catalyzes the initial step of the lipid cycle reactions in the biosynthesis of the cell wall peptidoglycan: transfers peptidoglycan precursor phospho-MurNAc-pentapeptide from UDP-MurNAc-pentapeptide onto the lipid carrier undecaprenyl phosphate, yielding undecaprenyl-pyrophosphoryl-MurNAc-pentapeptide, known as lipid I. The protein is Phospho-N-acetylmuramoyl-pentapeptide-transferase of Nitratiruptor sp. (strain SB155-2).